The sequence spans 180 residues: Bifunctional bis(5'-adenosyl)-triphosphatase/adenylylsulfatase FHIT (180 aa).

An HIT domain is found at 27–134 (SYAFGPYKID…LPRKGGDFEK (108 aa)). Asn52 and Gln108 together coordinate substrate. A Histidine triad motif motif is present at residues 119-123 (HVHIH). His121 acts as the Tele-AMP-histidine intermediate in catalysis. His123 serves as a coordination point for substrate.

It catalyses the reaction P(1),P(3)-bis(5'-adenosyl) triphosphate + H2O = AMP + ADP + 2 H(+). The catalysed reaction is adenosine 5'-phosphosulfate + H2O = sulfate + AMP + 2 H(+). The enzyme catalyses adenosine 5'-phosphosulfate + NH4(+) = adenosine 5'-phosphoramidate + sulfate + 2 H(+). It carries out the reaction adenosine 5'-phosphoramidate + H2O = AMP + NH4(+). In terms of biological role, possesses dinucleoside triphosphate hydrolase activity. Cleaves P(1)-P(3)-bis(5'-adenosyl) triphosphate (Ap3A) to yield AMP and ADP. Exhibits adenylylsulfatase activity, hydrolyzing adenosine 5'-phosphosulfate to yield AMP and sulfate. Exhibits adenosine 5'-monophosphoramidase activity, hydrolyzing purine nucleotide phosphoramidates with a single phosphate group such as adenosine 5'monophosphoramidate (AMP-NH2) to yield AMP and NH2. Exhibits adenylylsulfate-ammonia adenylyltransferase, catalyzing the ammonolysis of adenosine 5'-phosphosulfate resulting in the formation of adenosine 5'-phosphoramidate. This is Bifunctional bis(5'-adenosyl)-triphosphatase/adenylylsulfatase FHIT from Arabidopsis thaliana (Mouse-ear cress).